Here is a 199-residue protein sequence, read N- to C-terminus: Imidazoleglycerol-phosphate dehydratase (199 aa).

This sequence belongs to the imidazoleglycerol-phosphate dehydratase family.

The protein localises to the cytoplasm. It catalyses the reaction D-erythro-1-(imidazol-4-yl)glycerol 3-phosphate = 3-(imidazol-4-yl)-2-oxopropyl phosphate + H2O. The protein operates within amino-acid biosynthesis; L-histidine biosynthesis; L-histidine from 5-phospho-alpha-D-ribose 1-diphosphate: step 6/9. In Kineococcus radiotolerans (strain ATCC BAA-149 / DSM 14245 / SRS30216), this protein is Imidazoleglycerol-phosphate dehydratase.